The following is a 327-amino-acid chain: MATMASTSNCSPVATSPLMMLLFKALQEGGDSEDEARRRREQLNRRPSYRMILKDLETADKVMKKEPEETPPSSVDASPLQFQSVMRPPPTAPPTSAATPNRILPSSNAASPYGSPLGSSILSNQPLVLPFAPINGDFDFSAAIAAASQPKVFPGGPQQNGLGGGGGGGGVPGPSSGIAGMSVQPPTSSTPSQQQSVQSLEGTSGLIGSAMKPMLGIDAVSFPEFGTTDWQSPMLSGGYSSSPSPTMTGGSMRMGGGPLHGEDESNRKRQVRLLKNREAAKECRRKKKEYVKCLENRVSVLENQNKALIEELKTLKELYCRKEKDGM.

Positions 16-75 constitute a KID domain; the sequence is SPLMMLLFKALQEGGDSEDEARRRREQLNRRPSYRMILKDLETADKVMKKEPEETPPSSV. Disordered regions lie at residues 27–114 and 151–200; these read QEGG…SPYG and KVFP…VQSL. Positions 35 to 44 are enriched in basic and acidic residues; the sequence is EARRRREQLN. Serine 48 is subject to Phosphoserine. Positions 52-68 are enriched in basic and acidic residues; the sequence is ILKDLETADKVMKKEPE. The segment covering 71–84 has biased composition (polar residues); that stretch reads PPSSVDASPLQFQS. The span at 161–172 shows a compositional bias: gly residues; sequence GLGGGGGGGGVP. Positions 173–199 are enriched in low complexity; the sequence is GPSSGIAGMSVQPPTSSTPSQQQSVQS. A bZIP domain is found at 266 to 317; it reads NRKRQVRLLKNREAAKECRRKKKEYVKCLENRVSVLENQNKALIEELKTLKE. The tract at residues 267–292 is basic motif; the sequence is RKRQVRLLKNREAAKECRRKKKEYVK. A coiled-coil region spans residues 284-318; that stretch reads RRKKKEYVKCLENRVSVLENQNKALIEELKTLKEL. The segment at 294–315 is leucine-zipper; sequence LENRVSVLENQNKALIEELKTL.

The protein belongs to the bZIP family. As to quaternary structure, interacts with CREB-regulated transcription coactivator homolog crtc-1. Transcriptional activity is enhanced by phosphorylation. Phosphorylated by cmk-1. In terms of tissue distribution, expressed widely, including in head neurons AFD, gustatory neurons ASE, the olfactory neurons AWC, and in the ASI sensory neurons, as well as in the intestine and gonads in hermaphrodites.

The protein localises to the nucleus. Transcription factor. Transcriptional activity probably positively regulated by phosphorylation. Modulates expression of target genes, acting by binding to regulatory cAMP response elements (CRE). Acts downstream of the calcium-triggered CaMKK-CaMK1 signaling cascade, consisting of the protein kinase kinase ckk-1 and the protein kinase cmk-1. Plays a role in learning and memory, feeding behavior, stress response, entry into the dauer stage and modulation of lifespan. Involved in commitment to the developmentally arrested larval state known as dauer, acting by positively regulating the expression of dauer-inhibiting TGF-beta-like daf-7 in the ASI neurons. Plays a role in both associative and non-associative long-term memory (LTM). Involved in modulating feeding behavior, acting by regulating transcription of tryptophan hydroxylase tph-1 in serotonergic ADF neurons. Regulates transcription of genes involved in endoplasmic reticulum (ER) stress. Involved in modulation of lifespan, in response to raised temperature, but independently of the heat-shock response pathway, acting by regulating transcription of FMRFamide-like neuropeptides flp-6 in the AFD neuron. Functionally, plays a role in associative long-term memory (LTM) and learning. In terms of biological role, plays a role in associative long-term memory (LTM) and learning; perhaps required at the time of acquisition and/or the consolidation phase of memory formation. The sequence is that of CREB homolog crh-1 from Caenorhabditis elegans.